The sequence spans 349 residues: Fructose-1,6-bisphosphatase class 1 (349 aa).

4 residues coordinate Mg(2+): E91, D110, L112, and D113. Substrate is bound by residues 113–116 (DGSS) and N205. Residue E277 participates in Mg(2+) binding.

This sequence belongs to the FBPase class 1 family. Homotetramer. The cofactor is Mg(2+).

It localises to the cytoplasm. The enzyme catalyses beta-D-fructose 1,6-bisphosphate + H2O = beta-D-fructose 6-phosphate + phosphate. It participates in carbohydrate biosynthesis; gluconeogenesis. This chain is Fructose-1,6-bisphosphatase class 1, found in Rhizobium meliloti (strain 1021) (Ensifer meliloti).